A 192-amino-acid polypeptide reads, in one-letter code: Ribosomal RNA small subunit methyltransferase G (192 aa).

S-adenosyl-L-methionine contacts are provided by residues glycine 63, leucine 68, 112–113 (IE), and arginine 125.

It belongs to the methyltransferase superfamily. RNA methyltransferase RsmG family.

The protein localises to the cytoplasm. The catalysed reaction is guanosine(527) in 16S rRNA + S-adenosyl-L-methionine = N(7)-methylguanosine(527) in 16S rRNA + S-adenosyl-L-homocysteine. Functionally, specifically methylates the N7 position of guanine in position 527 of 16S rRNA. This is Ribosomal RNA small subunit methyltransferase G from Rickettsia rickettsii (strain Iowa).